The following is an 818-amino-acid chain: Piwi-like protein (818 aa).

The PAZ domain occupies 220–339; that stretch reads RINRVLNDNS…ITGELCFLCG (120 aa). In terms of domain architecture, Piwi spans 501–800; that stretch reads KIALVFVPDD…LAELIGKVHK (300 aa).

This sequence belongs to the argonaute family. Piwi subfamily.

The polypeptide is Piwi-like protein (iwi) (Dugesia japonica (Planarian)).